The primary structure comprises 260 residues: Thrombin-like enzyme 1 (260 aa).

Positions 1–18 are cleaved as a signal peptide; the sequence is MVLITVLANLLILQLSYA. A propeptide spanning residues 19–24 is cleaved from the precursor; it reads QKSSEL. One can recognise a Peptidase S1 domain in the interval 25–251; sequence VIGGDECNIN…HLDWIQSIIA (227 aa). 6 disulfides stabilise this stretch: Cys31-Cys165, Cys52-Cys68, Cys102-Cys258, Cys144-Cys212, Cys176-Cys191, and Cys202-Cys227. His67 functions as the Charge relay system in the catalytic mechanism. Asn105 carries N-linked (GlcNAc...) asparagine glycosylation. The active-site Charge relay system is Asp112. Asn156 and Asn172 each carry an N-linked (GlcNAc...) asparagine glycan. Catalysis depends on Ser206, which acts as the Charge relay system. Asn253 is a glycosylation site (N-linked (GlcNAc...) asparagine).

Belongs to the peptidase S1 family. Snake venom subfamily. Monomer. Expressed by the venom gland.

It localises to the secreted. Thrombin-like snake venom serine protease. The polypeptide is Thrombin-like enzyme 1 (Trimeresurus albolabris (White-lipped pit viper)).